The sequence spans 874 residues: Alanine--tRNA ligase (874 aa).

4 residues coordinate Zn(2+): His562, His566, Cys664, and His668.

This sequence belongs to the class-II aminoacyl-tRNA synthetase family. The cofactor is Zn(2+).

Its subcellular location is the cytoplasm. It carries out the reaction tRNA(Ala) + L-alanine + ATP = L-alanyl-tRNA(Ala) + AMP + diphosphate. Functionally, catalyzes the attachment of alanine to tRNA(Ala) in a two-step reaction: alanine is first activated by ATP to form Ala-AMP and then transferred to the acceptor end of tRNA(Ala). Also edits incorrectly charged Ser-tRNA(Ala) and Gly-tRNA(Ala) via its editing domain. The sequence is that of Alanine--tRNA ligase from Neisseria meningitidis serogroup C (strain 053442).